We begin with the raw amino-acid sequence, 270 residues long: Tryptophan synthase alpha chain (270 aa).

Catalysis depends on proton acceptor residues E50 and D61.

Belongs to the TrpA family. As to quaternary structure, tetramer of two alpha and two beta chains.

It carries out the reaction (1S,2R)-1-C-(indol-3-yl)glycerol 3-phosphate + L-serine = D-glyceraldehyde 3-phosphate + L-tryptophan + H2O. It participates in amino-acid biosynthesis; L-tryptophan biosynthesis; L-tryptophan from chorismate: step 5/5. Functionally, the alpha subunit is responsible for the aldol cleavage of indoleglycerol phosphate to indole and glyceraldehyde 3-phosphate. The polypeptide is Tryptophan synthase alpha chain (Chlorobium luteolum (strain DSM 273 / BCRC 81028 / 2530) (Pelodictyon luteolum)).